A 333-amino-acid polypeptide reads, in one-letter code: Thiamine-monophosphate kinase (333 aa).

Residues Asp-35, Thr-50, and Asp-51 each contribute to the Mg(2+) site. A substrate-binding site is contributed by His-58. Position 80 (Asp-80) interacts with Mg(2+). Residues Tyr-111, Gly-128–Asp-129, and Arg-153 contribute to the ATP site. Residue Asp-129 coordinates Mg(2+). Asp-230 serves as a coordination point for Mg(2+). Ser-232 is an ATP binding site. Asp-233 contacts Mg(2+). Positions 278 and 330 each coordinate substrate.

The protein belongs to the thiamine-monophosphate kinase family.

It carries out the reaction thiamine phosphate + ATP = thiamine diphosphate + ADP. It functions in the pathway cofactor biosynthesis; thiamine diphosphate biosynthesis; thiamine diphosphate from thiamine phosphate: step 1/1. In terms of biological role, catalyzes the ATP-dependent phosphorylation of thiamine-monophosphate (TMP) to form thiamine-pyrophosphate (TPP), the active form of vitamin B1. The polypeptide is Thiamine-monophosphate kinase (Prochlorococcus marinus (strain SARG / CCMP1375 / SS120)).